The following is a 349-amino-acid chain: MVRAKRKLDHIEYALSTGQSRTHGFHDIDFVHQSLPNSSYETITCETKIGELSLSSPIFINAMTGGGGEKTLHINEQLAYVAKHHNLAMAVGSQMAALKDESEAASYKIIRKVNPNGIFFANLGSEATIEQAERAVDMIEANALQIHLNVIQELTMPEGDRDFTGVLQRIEKIVLNSKVPVIVKEVGFGMSKETMQQLASVGVTAIDIGGQGGTNFAAVENERRQRMLSYFNNWGIQTATSIIEATSTNNNLSFIASGGIQTALDVAKAIALGANTTAFAGYFLRILMEDGIEKLVDEIDLLHTDLKFIMTALGAKTIEELQSVPLVIKGETYHWLTQRGIDTTHYSRR.

Arginine 6–lysine 7 contributes to the substrate binding site. Residues alanine 62–threonine 64, serine 93, and asparagine 122 contribute to the FMN site. A substrate-binding site is contributed by glutamine 152. Glutamate 153 lines the Mg(2+) pocket. Residues lysine 184, threonine 214, glycine 258–glycine 259, and alanine 280–glycine 281 each bind FMN.

It belongs to the IPP isomerase type 2 family. As to quaternary structure, homooctamer. Dimer of tetramers. Requires FMN as cofactor. NADPH serves as cofactor. Mg(2+) is required as a cofactor.

Its subcellular location is the cytoplasm. The catalysed reaction is isopentenyl diphosphate = dimethylallyl diphosphate. Involved in the biosynthesis of isoprenoids. Catalyzes the 1,3-allylic rearrangement of the homoallylic substrate isopentenyl (IPP) to its allylic isomer, dimethylallyl diphosphate (DMAPP). This Bacillus cereus (strain ZK / E33L) protein is Isopentenyl-diphosphate delta-isomerase.